Reading from the N-terminus, the 378-residue chain is Pyrimidine monooxygenase RutA (378 aa).

FMN-binding positions include 65 to 66, Asn131, Glu140, 156 to 157, and Ser206; these read IK and RY.

Belongs to the NtaA/SnaA/DszA monooxygenase family. RutA subfamily.

It catalyses the reaction uracil + FMNH2 + NADH + O2 = (Z)-3-ureidoacrylate + FMN + NAD(+) + H2O + H(+). It carries out the reaction thymine + FMNH2 + NADH + O2 = (Z)-2-methylureidoacrylate + FMN + NAD(+) + H2O + H(+). Catalyzes the pyrimidine ring opening between N-3 and C-4 by an unusual flavin hydroperoxide-catalyzed mechanism, adding oxygen atoms in the process to yield ureidoacrylate peracid, that immediately reacts with FMN forming ureidoacrylate and FMN-N(5)-oxide. The FMN-N(5)-oxide reacts spontaneously with NADH to produce FMN. Requires the flavin reductase RutF to regenerate FMN in vivo. The sequence is that of Pyrimidine monooxygenase RutA from Cronobacter turicensis (strain DSM 18703 / CCUG 55852 / LMG 23827 / z3032).